Here is a 71-residue protein sequence, read N- to C-terminus: Large ribosomal subunit protein bL31 (71 aa).

Cys16, Cys18, Cys37, and Cys40 together coordinate Zn(2+).

It belongs to the bacterial ribosomal protein bL31 family. Type A subfamily. As to quaternary structure, part of the 50S ribosomal subunit. Zn(2+) is required as a cofactor.

Binds the 23S rRNA. The polypeptide is Large ribosomal subunit protein bL31 (Solidesulfovibrio magneticus (strain ATCC 700980 / DSM 13731 / RS-1) (Desulfovibrio magneticus)).